Consider the following 320-residue polypeptide: Acetyl-coenzyme A carboxylase carboxyl transferase subunit alpha (320 aa).

Residues arginine 41–glutamate 295 enclose the CoA carboxyltransferase C-terminal domain.

The protein belongs to the AccA family. Acetyl-CoA carboxylase is a heterohexamer composed of biotin carboxyl carrier protein (AccB), biotin carboxylase (AccC) and two subunits each of ACCase subunit alpha (AccA) and ACCase subunit beta (AccD).

It is found in the cytoplasm. The catalysed reaction is N(6)-carboxybiotinyl-L-lysyl-[protein] + acetyl-CoA = N(6)-biotinyl-L-lysyl-[protein] + malonyl-CoA. The protein operates within lipid metabolism; malonyl-CoA biosynthesis; malonyl-CoA from acetyl-CoA: step 1/1. Functionally, component of the acetyl coenzyme A carboxylase (ACC) complex. First, biotin carboxylase catalyzes the carboxylation of biotin on its carrier protein (BCCP) and then the CO(2) group is transferred by the carboxyltransferase to acetyl-CoA to form malonyl-CoA. This is Acetyl-coenzyme A carboxylase carboxyl transferase subunit alpha from Bradyrhizobium sp. (strain BTAi1 / ATCC BAA-1182).